Here is a 1172-residue protein sequence, read N- to C-terminus: Short transient receptor potential channel 2 (1172 aa).

Over residues 1–10 (MLMSRTDSKS) the composition is skewed to basic and acidic residues. Disordered stretches follow at residues 1–22 (MLMSRTDSKSGKNRSGVRMFKD), 69–98 (VVDPSAPGSSGLNQNSTDVLESDPRPWLTN), 140–227 (SAAR…GGVQ), and 249–271 (ATCGESPPPQPASPASLSSSESV). Over 1–659 (MLMSRTDSKS…PKSQLGRLLK (659 aa)) the chain is Cytoplasmic. The segment covering 75 to 87 (PGSSGLNQNSTDV) has biased composition (polar residues). Residues 166–177 (ESAEPRAEEPNR) are compositionally biased toward basic and acidic residues. Residues 195–204 (SLSNSSSQPN) show a composition bias toward polar residues. Residues 206 to 218 (RTGRTRQRQHRPQ) show a composition bias toward basic residues. Residues 261 to 270 (SPASLSSSES) are compositionally biased toward low complexity. ANK repeat units follow at residues 301-330 (KFPPTLLRAIQEGQLGLVQQLLESSSDASG), 377-406 (QIHEALLVAVDTNQPAVVRRLLARLEREKG), and 430-459 (PGVTPLTLACQKDLYEIAQLLMDQGHTIAR). The chain crosses the membrane as a helical span at residues 660-680 (IPVLKFLLHSASYLWFLIFLL). The Extracellular portion of the chain corresponds to 681-702 (GESLVMETQLSTFKGRSQSVWE). A helical membrane pass occupies residues 703 to 723 (TSLHMIWVTGFLWFECKEVWI). Topologically, residues 724-738 (EGLRSYLLDWWNFLD) are cytoplasmic. Residues 739–759 (VVILSLYLASFALRLLLAGLA) form a helical membrane-spanning segment. Over 760-789 (YMHCRDASDSTTCRYFTTAERSEWRTEDPQ) the chain is Extracellular. The chain crosses the membrane as a helical span at residues 790–810 (FLAEVLFAVTSMLSFTRLAYI). Residues 811 to 833 (LPAHESLGTLQISIGKMIDDMIR) are Cytoplasmic-facing. A helical transmembrane segment spans residues 834–854 (FMFILMIILTAFLCGLNNIYV). Residues 855–899 (PYQESEKLGNFNETFQFLFWTMFGMEEHTVVDMPQFLVPEFVGRA) are Extracellular-facing. A helical membrane pass occupies residues 900–920 (MYGIFTIVMVIVLLNMLIAMI). Residues 921-1172 (TNSFQKIEDD…EGDLETKGES (252 aa)) lie on the Cytoplasmic side of the membrane. Positions 1118 to 1172 (VSLGDGLDGTGEAGAPAPGEPGSSSSAHVLVHREQEAEGSGDLLLEGDLETKGES) are disordered. Residues 1130–1144 (AGAPAPGEPGSSSSA) show a composition bias toward low complexity.

This sequence belongs to the transient receptor (TC 1.A.4) family. STrpC subfamily. TRPC2 sub-subfamily. Isoform 3 is ubiquitously expressed at low levels. Isoform 4 is expressed exclusively in vomeronasal organ.

The protein resides in the membrane. Thought to form a receptor-activated non-selective calcium permeant cation channel. Probably is operated by a phosphatidylinositol second messenger system activated by receptor tyrosine kinases or G-protein coupled receptors. May also be activated by intracellular calcium store depletion. Plays a role in mediating responsivity to pheromones that elicit aggressive and mating behaviors. Required for response to the Esp1 pheromone which enhances female sexual receptive behavior and to the Esp22 pheromone which inhibits adult male mating behavior. The chain is Short transient receptor potential channel 2 (Trpc2) from Mus musculus (Mouse).